We begin with the raw amino-acid sequence, 447 residues long: Dimethylsulfoniopropionate lyase DddP (447 aa).

The segment at 1 to 26 (MNRHFNATRKIDPSRGATLGDGSPND) is disordered. Positions 295, 297, 307, 371, 406, and 421 each coordinate a divalent metal cation.

Belongs to the peptidase M24B family. In terms of assembly, homodimer. A divalent metal cation serves as cofactor.

The enzyme catalyses S,S-dimethyl-beta-propiothetin = acrylate + dimethyl sulfide + H(+). In terms of biological role, able to cleave dimethylsulfoniopropionate (DMSP), releasing dimethyl sulfide (DMS). DMS is the principal form by which sulfur is transported from oceans to the atmosphere. The real activity of the protein is however subject to debate and it is unclear whether it constitutes a real dimethylsulfoniopropionate lyase in vivo: the low activity with DMSP as substrate suggests that DMSP is not its native substrate. The protein is Dimethylsulfoniopropionate lyase DddP of Roseobacter denitrificans (strain ATCC 33942 / OCh 114) (Erythrobacter sp. (strain OCh 114)).